Here is a 607-residue protein sequence, read N- to C-terminus: UvrABC system protein C (607 aa).

One can recognise a GIY-YIG domain in the interval 16–94 (GRPGVYRMFD…IKEWRPPYNI (79 aa)). Positions 203 to 238 (NALTDELSGAMEQAASTLDFERAAELRDQISLLRRV) constitute a UVR domain.

It belongs to the UvrC family. Interacts with UvrB in an incision complex.

The protein resides in the cytoplasm. In terms of biological role, the UvrABC repair system catalyzes the recognition and processing of DNA lesions. UvrC both incises the 5' and 3' sides of the lesion. The N-terminal half is responsible for the 3' incision and the C-terminal half is responsible for the 5' incision. The chain is UvrABC system protein C from Pseudomonas fluorescens (strain SBW25).